Reading from the N-terminus, the 891-residue chain is DNA mismatch repair protein MutS (891 aa).

634 to 641 (GPNMGGKS) serves as a coordination point for ATP.

Belongs to the DNA mismatch repair MutS family.

Its function is as follows. This protein is involved in the repair of mismatches in DNA. It is possible that it carries out the mismatch recognition step. This protein has a weak ATPase activity. The polypeptide is DNA mismatch repair protein MutS (Burkholderia mallei (strain NCTC 10247)).